The following is a 1760-amino-acid chain: Chitin synthase csmB (1760 aa).

Low complexity predominate over residues 1 to 17 (MSNRFSVYSSHSTGVSS). Positions 1 to 23 (MSNRFSVYSSHSTGVSSARPSAP) are disordered. Positions 1–374 (MSNRFSVYSS…TVSITVVDIP (374 aa)) constitute a Myosin motor domain. Asparagine 275 carries an N-linked (GlcNAc...) asparagine glycan. The segment at 344-363 (LDNDPSTSGGSGPGGQWTDD) is disordered. Residue proline 374 is a region of interest, actin-binding. A run of 2 helical transmembrane segments spans residues 731-751 (IWVG…LRWI) and 767-787 (LVLM…IIAF). N-linked (GlcNAc...) asparagine glycans are attached at residues asparagine 878, asparagine 906, and asparagine 995. A helical membrane pass occupies residues 1029 to 1049 (ILLSFTVLICAVILVKFVSAL). An N-linked (GlcNAc...) asparagine glycan is attached at asparagine 1394. A run of 3 helical transmembrane segments spans residues 1419-1439 (FVVL…VYLG), 1452-1472 (FPMI…IIFL), and 1480-1500 (IGWM…LPLY). N-linked (GlcNAc...) asparagine glycans are attached at residues asparagine 1584 and asparagine 1652. The DEK-C domain maps to 1702 to 1758 (GPDEGAITEAIRACLAEVDLDTVTKKQVRALVEQRLQTTLMGDKRTFLDRQIDHELA).

The protein in the N-terminal section; belongs to the TRAFAC class myosin-kinesin ATPase superfamily. Myosin family. It in the C-terminal section; belongs to the chitin synthase family. Class V subfamily.

The protein resides in the cell membrane. It localises to the cell septum. It is found in the cell tip. The catalysed reaction is [(1-&gt;4)-N-acetyl-beta-D-glucosaminyl](n) + UDP-N-acetyl-alpha-D-glucosamine = [(1-&gt;4)-N-acetyl-beta-D-glucosaminyl](n+1) + UDP + H(+). Polymerizes chitin, a structural polymer of the cell wall and septum, by transferring the sugar moiety of UDP-GlcNAc to the non-reducing end of the growing chitin polymer. Plays an important role in septal growth or maintenance. Mediates colony spore formation. The polypeptide is Chitin synthase csmB (Aspergillus niger (strain ATCC MYA-4892 / CBS 513.88 / FGSC A1513)).